We begin with the raw amino-acid sequence, 1696 residues long: MDSSHYNPTYDPWNSPYSPHLHPPSAPLPPPPPLPPPPPPRQSHPESPNLYGRSTQSNGQRQDYLHQYSHHRQDLPPNTVVNQPTSNYYQHPPPLQQQHQPLSLQQQQQHPQYIPQQVSYEPQRISQPLTSSIQCTESQSDWVGFNEKRLDSWTVDSGPGRSRVDDGPSRNYQYDYSRNSSGVNRGLDGSSRSRDEFRSLGYARKESGVTRTEGNYQARGQLKSESDRYVRGLGDGNRVLSSSVGYGSDRYGLTVSRDVTRSSASREGARETRNEGRTLYPEKKDDYYHSEIEQYFDRGRREASNELNRTPRKQVQKKSALLRLETPRSYKNSRENEWSRQHNHHNGNGKRFNSNSYRGKEHLGHSDRGLVEKQRGRSPVDLDISFKSNVLVAKPVASPTSAGIRSGASVTPRSIKARRALLSDKNEKVSVTERNGKLGTHLSDEISVSEGFRRSTRQTTASKNEKEPDSHSTPSSSDSGGKLNKVRFVNGVVQDSKVKLTDSGPEASTHDTEKISSFCETLIEAKDDINVKHGINTEACSTEEGVIDGNQSTLKSHEDVLDRTSTDCNAGEALLPKVMEMDEILKTKTTINTSPGKLPVSWPTVADLSGCSEDMDCDEDMDCDEDMDCIPSRNIPMMEVNTGFEERKSINSSDGSLGYGGKDFQKPYLDASIYFNREDPGDKVLAKSDIGGIEDDNKRIDKNVDSLSPENDSSRGRPMGLDSPASLDIANVSLDLANSNNSASGDLANANSFTVGTYMNPMVTSPDKSVVFQMESKNLPHCKNTVNAPVENVSGKGYMETTPLNVAAETADNMDSEEGKQTCVNDTSSSLTKVGVKGSSNVLSVERTGGCSHSDESDLAMAVPSEGCMENVSTERLVPDEELILKSYHPAEIPCVDSGSDSRGLKTCLLEPNVSLSKDLTDCARESLVEQDVSQRSAIFCDKLPSLSAFVTETTLAIGINGMSGNETVTDTESGLHEIQPCTTVCKLSPEDRFGYGSSGAIGSVRSLSIDKNLEKDSSKVSSCLVSDNSVSPCHISPLVAVNEEIQNKISVKANYSNSQDGIKHKEDNCTESVEVETHEEKAKLPGGTSKYRTPVTNITAGSGGDSLFLCDSLSSSRRRIRSEVHVSAVVDETSKGEEKSKPSGGIVAVRRDSVFPCDSLSSSPRLSRPLRSEIHVASMVDETSKSIEKIESSGGTSEHRTPETDIVAGSRDSVFPCNSLSNSQRLSFRQLRSEIHVANMVDETNRVKESQNGDSLLDTLQEQIMTSHELTQPGSSAHCDLVMKPMGDPIAKLTDITSDVGSQEKDLRNIAKTDTFDGEAVSSDGQVSGTEIPGGSGVRVSRSYSHADVKFALTHVKEHVVSVPHRDPQSKTSMNSKYEIEKRKKKPNYSTQKSYPSSLPYVSDTKKDANPPIHITKRHTWHRKSDASPSSFVAAKPLSSTLSTQQKFPKVTAQSNNSYVRKGNSLLRKPSHGSPGAALGIPPSAIQLNHFTVEDKSTGSSNMVDVDNASSLVKTGEIATLERQSKPPSDSSTSKLSNAIATSSGKCALSYSTDHLTTGLPESIMDSATSGEANFPHSGGDTLKTSDTLIQTGYASDCQQKRNPSDLDSSNLKRMVYVKRKANQLVAASDIHDVSQNQIPSSDGYFKRSKNQLVRNSESRCNQSISLPDDALDTRSAANMVSERPSSSAFSDSGM.

Disordered regions lie at residues 1-113 (MDSS…HPQY), 151-194 (DSWT…SRSR), 258-284 (DVTR…PEKK), and 299-376 (GRRE…KQRG). The segment covering 21–42 (LHPPSAPLPPPPPLPPPPPPRQ) has biased composition (pro residues). Residues 52–61 (GRSTQSNGQR) show a composition bias toward polar residues. Over residues 96-113 (QQQHQPLSLQQQQQHPQY) the composition is skewed to low complexity. Over residues 170-183 (RNYQYDYSRNSSGV) the composition is skewed to polar residues. Basic and acidic residues-rich tracts occupy residues 267–284 (EGAR…PEKK), 325–340 (ETPR…EWSR), and 358–376 (RGKE…KQRG). S378 carries the post-translational modification Phosphoserine. Disordered regions lie at residues 419–483 (RALL…GGKL), 688–724 (SDIG…LDSP), 1063–1090 (IKHK…GGTS), 1184–1211 (TSKS…VAGS), 1319–1340 (GEAV…SGVR), 1361–1429 (VVSV…SDAS), and 1658–1696 (SESR…DSGM). Composition is skewed to basic and acidic residues over residues 421–436 (LLSD…ERNG) and 695–704 (DDNKRIDKNV). S708 is subject to Phosphoserine. Residues 1184–1204 (TSKSIEKIESSGGTSEHRTPE) are compositionally biased toward basic and acidic residues. Basic and acidic residues predominate over residues 1361 to 1370 (VVSVPHRDPQ). 3 stretches are compositionally biased toward polar residues: residues 1389–1398 (NYSTQKSYPS), 1658–1667 (SESRCNQSIS), and 1677–1696 (SAAN…DSGM).

This is an uncharacterized protein from Arabidopsis thaliana (Mouse-ear cress).